The primary structure comprises 105 residues: ESAT-6-like protein EsxU (105 aa).

It belongs to the WXG100 family. CFP-10 subfamily. Forms a tight 1:1 complex with EsxT. Complex formation results in induction of alpha-helical conformation and stability against chemical denaturation.

The protein resides in the secreted. The polypeptide is ESAT-6-like protein EsxU (Mycobacterium tuberculosis (strain ATCC 25618 / H37Rv)).